The following is a 159-amino-acid chain: uncharacterized protein (159 aa).

Transmembrane regions (helical) follow at residues 22–42 (LFSSSLYHSAFDCSFGISFTI), 45–65 (PIEYIVLSKPCFFAITPLLTL), 80–100 (IWVSTVTSLPISHCLIVSLSL), and 104–124 (FPSLFYSALVLSCLSLLCLAF).

Its subcellular location is the membrane. This is an uncharacterized protein from Schizosaccharomyces pombe (strain 972 / ATCC 24843) (Fission yeast).